An 84-amino-acid polypeptide reads, in one-letter code: Large ribosomal subunit protein bL31 (84 aa).

Disordered regions lie at residues 1–41 and 63–84; these read MQHD…DSTN and RRYGLTDDDEGDDEETEDAADE. The segment covering 21–30 has biased composition (polar residues); it reads EITTRSTMET. Positions 68–84 are enriched in acidic residues; it reads TDDDEGDDEETEDAADE.

It belongs to the bacterial ribosomal protein bL31 family. Type A subfamily. In terms of assembly, part of the 50S ribosomal subunit.

Its function is as follows. Binds the 23S rRNA. This chain is Large ribosomal subunit protein bL31, found in Salinibacter ruber (strain DSM 13855 / M31).